The chain runs to 391 residues: Lipoyl synthase, mitochondrial (391 aa).

A mitochondrion-targeting transit peptide spans methionine 1–valine 44. The [4Fe-4S] cluster site is built by cysteine 120, cysteine 125, cysteine 131, cysteine 150, cysteine 154, cysteine 157, and serine 365. The Radical SAM core domain maps to lysine 135 to leucine 354.

This sequence belongs to the radical SAM superfamily. Lipoyl synthase family. [4Fe-4S] cluster serves as cofactor.

It localises to the mitochondrion. The catalysed reaction is [[Fe-S] cluster scaffold protein carrying a second [4Fe-4S](2+) cluster] + N(6)-octanoyl-L-lysyl-[protein] + 2 oxidized [2Fe-2S]-[ferredoxin] + 2 S-adenosyl-L-methionine + 4 H(+) = [[Fe-S] cluster scaffold protein] + N(6)-[(R)-dihydrolipoyl]-L-lysyl-[protein] + 4 Fe(3+) + 2 hydrogen sulfide + 2 5'-deoxyadenosine + 2 L-methionine + 2 reduced [2Fe-2S]-[ferredoxin]. It participates in protein modification; protein lipoylation via endogenous pathway; protein N(6)-(lipoyl)lysine from octanoyl-[acyl-carrier-protein]: step 2/2. In terms of biological role, catalyzes the radical-mediated insertion of two sulfur atoms into the C-6 and C-8 positions of the octanoyl moiety bound to the lipoyl domains of lipoate-dependent enzymes, thereby converting the octanoylated domains into lipoylated derivatives. This is Lipoyl synthase, mitochondrial from Clavispora lusitaniae (strain ATCC 42720) (Yeast).